A 236-amino-acid polypeptide reads, in one-letter code: Aminopyrimidine aminohydrolase (236 aa).

Asp44 contributes to the substrate binding site. The active-site Nucleophile is the Cys135. Residues Tyr139 and Tyr163 each contribute to the substrate site. Catalysis depends on Glu205, which acts as the Proton donor.

Belongs to the TenA family. Homotetramer.

It carries out the reaction 4-amino-5-aminomethyl-2-methylpyrimidine + H2O = 4-amino-5-hydroxymethyl-2-methylpyrimidine + NH4(+). The catalysed reaction is thiamine + H2O = 5-(2-hydroxyethyl)-4-methylthiazole + 4-amino-5-hydroxymethyl-2-methylpyrimidine + H(+). It participates in cofactor biosynthesis; thiamine diphosphate biosynthesis. Functionally, catalyzes an amino-pyrimidine hydrolysis reaction at the C5' of the pyrimidine moiety of thiamine compounds, a reaction that is part of a thiamine salvage pathway. Thus, catalyzes the conversion of 4-amino-5-aminomethyl-2-methylpyrimidine to 4-amino-5-hydroxymethyl-2-methylpyrimidine (HMP). To a lesser extent, is also able to catalyze the hydrolytic cleavage of thiamine; however, this thiaminase activity is unlikely to be physiologically relevant. Therefore, is involved in the regeneration of the thiamine pyrimidine from thiamine degraded products present in the environment, rather than in thiamine degradation. The polypeptide is Aminopyrimidine aminohydrolase (Bacillus subtilis (strain 168)).